Consider the following 446-residue polypeptide: Histidine--tRNA ligase (446 aa).

It belongs to the class-II aminoacyl-tRNA synthetase family. In terms of assembly, homodimer.

Its subcellular location is the cytoplasm. The catalysed reaction is tRNA(His) + L-histidine + ATP = L-histidyl-tRNA(His) + AMP + diphosphate + H(+). This is Histidine--tRNA ligase from Burkholderia pseudomallei (strain 1710b).